Consider the following 180-residue polypeptide: Large ribosomal subunit protein uL5 (180 aa).

It belongs to the universal ribosomal protein uL5 family. Part of the 50S ribosomal subunit; part of the 5S rRNA/L5/L18/L25 subcomplex. Contacts the 5S rRNA and the P site tRNA. Forms a bridge to the 30S subunit in the 70S ribosome.

In terms of biological role, this is one of the proteins that bind and probably mediate the attachment of the 5S RNA into the large ribosomal subunit, where it forms part of the central protuberance. In the 70S ribosome it contacts protein S13 of the 30S subunit (bridge B1b), connecting the 2 subunits; this bridge is implicated in subunit movement. Contacts the P site tRNA; the 5S rRNA and some of its associated proteins might help stabilize positioning of ribosome-bound tRNAs. The protein is Large ribosomal subunit protein uL5 of Lactobacillus acidophilus (strain ATCC 700396 / NCK56 / N2 / NCFM).